The following is a 140-amino-acid chain: uncharacterized protein (140 aa).

A glycan (N-linked (GlcNAc...) asparagine) is linked at asparagine 27. 3 helical membrane passes run 45 to 65, 76 to 96, and 116 to 136; these read FSLY…GVYA, VWIF…TGTV, and VPLC…YSMV.

The protein belongs to the TMEM170 family.

Its subcellular location is the membrane. This is an uncharacterized protein from Saccharomyces cerevisiae (strain ATCC 204508 / S288c) (Baker's yeast).